A 450-amino-acid chain; its full sequence is Sorting nexin-4 (450 aa).

At M1 the chain carries N-acetylmethionine. Residues 1–46 (MEQAPPDPEKLLQPGPLEPLGGPGAVLEAAVGEENEGTREDGSGVD) form a disordered region. A compositionally biased stretch (low complexity) spans 11-20 (LLQPGPLEPL). The PX domain maps to 61–187 (SVSEAEKRTG…YSFLTQEGNW (127 aa)). A 1,2-diacyl-sn-glycero-3-phospho-(1D-myo-inositol-3-phosphate) contacts are provided by R106, S108, K132, and R154.

This sequence belongs to the sorting nexin family. As to quaternary structure, heterodimer; heterodimerizes with SNX7 or SNX30. Interacts with WWC1/KIBRA. Identified in a complex with WWC1/KIBRA and dynein components DYNLL1 and DYNC1I2. Interacts with BIN1.

The protein localises to the early endosome. Its subcellular location is the early endosome membrane. In terms of biological role, involved in the regulation of endocytosis and in several stages of intracellular trafficking. Plays a role in recycling endocytosed transferrin receptor and prevent its degradation. Involved in autophagosome assembly by regulating trafficking and recycling of phospholipid scramblase ATG9A. In Mus musculus (Mouse), this protein is Sorting nexin-4.